The sequence spans 264 residues: Phosphatidylglycerol--prolipoprotein diacylglyceryl transferase (264 aa).

The next 3 membrane-spanning stretches (helical) occupy residues 17 to 37 (LAIH…LWLA), 59 to 79 (LLFY…VLFY), and 95 to 115 (WKGG…MALF). Arginine 142 is an a 1,2-diacyl-sn-glycero-3-phospho-(1'-sn-glycerol) binding site. A run of 2 helical transmembrane segments spans residues 205–225 (GQVS…AEYF) and 241–261 (MGQW…VWAG).

Belongs to the Lgt family.

The protein resides in the cell inner membrane. It catalyses the reaction L-cysteinyl-[prolipoprotein] + a 1,2-diacyl-sn-glycero-3-phospho-(1'-sn-glycerol) = an S-1,2-diacyl-sn-glyceryl-L-cysteinyl-[prolipoprotein] + sn-glycerol 1-phosphate + H(+). It participates in protein modification; lipoprotein biosynthesis (diacylglyceryl transfer). In terms of biological role, catalyzes the transfer of the diacylglyceryl group from phosphatidylglycerol to the sulfhydryl group of the N-terminal cysteine of a prolipoprotein, the first step in the formation of mature lipoproteins. The chain is Phosphatidylglycerol--prolipoprotein diacylglyceryl transferase from Methylibium petroleiphilum (strain ATCC BAA-1232 / LMG 22953 / PM1).